The primary structure comprises 158 residues: 6,7-dimethyl-8-ribityllumazine synthase (158 aa).

Residues phenylalanine 22, 57–59 (AVE), and 81–83 (AVI) each bind 5-amino-6-(D-ribitylamino)uracil. Position 86–87 (86–87 (GT)) interacts with (2S)-2-hydroxy-3-oxobutyl phosphate. Catalysis depends on histidine 89, which acts as the Proton donor. Phenylalanine 114 serves as a coordination point for 5-amino-6-(D-ribitylamino)uracil. Arginine 128 is a binding site for (2S)-2-hydroxy-3-oxobutyl phosphate.

This sequence belongs to the DMRL synthase family. In terms of assembly, forms an icosahedral capsid composed of 60 subunits, arranged as a dodecamer of pentamers.

It carries out the reaction (2S)-2-hydroxy-3-oxobutyl phosphate + 5-amino-6-(D-ribitylamino)uracil = 6,7-dimethyl-8-(1-D-ribityl)lumazine + phosphate + 2 H2O + H(+). It functions in the pathway cofactor biosynthesis; riboflavin biosynthesis; riboflavin from 2-hydroxy-3-oxobutyl phosphate and 5-amino-6-(D-ribitylamino)uracil: step 1/2. Its function is as follows. Catalyzes the formation of 6,7-dimethyl-8-ribityllumazine by condensation of 5-amino-6-(D-ribitylamino)uracil with 3,4-dihydroxy-2-butanone 4-phosphate. This is the penultimate step in the biosynthesis of riboflavin. This chain is 6,7-dimethyl-8-ribityllumazine synthase, found in Shewanella halifaxensis (strain HAW-EB4).